The following is a 62-amino-acid chain: Small ribosomal subunit protein eS27 (62 aa).

Residues Cys-17, Cys-20, Cys-36, and Cys-39 each coordinate Zn(2+). The segment at Cys-17 to Cys-39 adopts a C4-type zinc-finger fold.

Belongs to the eukaryotic ribosomal protein eS27 family. As to quaternary structure, part of the 30S ribosomal subunit. It depends on Zn(2+) as a cofactor.

The chain is Small ribosomal subunit protein eS27 from Methanosarcina mazei (strain ATCC BAA-159 / DSM 3647 / Goe1 / Go1 / JCM 11833 / OCM 88) (Methanosarcina frisia).